We begin with the raw amino-acid sequence, 247 residues long: ATP synthase subunit a, chloroplastic (247 aa).

Transmembrane regions (helical) follow at residues glutamine 38–valine 58, valine 95–leucine 115, isoleucine 134–threonine 154, leucine 199–leucine 219, and glycine 220–glycine 240.

The protein belongs to the ATPase A chain family. As to quaternary structure, F-type ATPases have 2 components, CF(1) - the catalytic core - and CF(0) - the membrane proton channel. CF(1) has five subunits: alpha(3), beta(3), gamma(1), delta(1), epsilon(1). CF(0) has four main subunits: a, b, b' and c.

It is found in the plastid. Its subcellular location is the chloroplast thylakoid membrane. Its function is as follows. Key component of the proton channel; it plays a direct role in the translocation of protons across the membrane. In Guizotia abyssinica (Niger), this protein is ATP synthase subunit a, chloroplastic.